Consider the following 734-residue polypeptide: Photosystem I P700 chlorophyll a apoprotein A2 (734 aa).

8 consecutive transmembrane segments (helical) span residues 46 to 69 (IFASHFGQLAIIFLWTSGNLFHVA), 135 to 158 (LYTGALFLLFLSAISLIAGWLHLQ), 175 to 199 (LNHHLSGLFGVSSLAWTGHLVHVAI), 273 to 291 (IAHHHLAIAFIFLVAGHMY), 330 to 353 (IHFQLGLALASLGVITSLVAQHMY), 369 to 395 (AALYTHHQYIAGFIMTGAFAHGAIFFI), 417 to 439 (AIISHLSWASLFLGFHTLGLYVH), and 517 to 535 (FLVHHAIALGLHTTTLILV). Residues cysteine 559 and cysteine 568 each contribute to the [4Fe-4S] cluster site. 2 consecutive transmembrane segments (helical) span residues 575–596 (AFYLAVFWMLNTIGWVTFYWHW) and 643–665 (LSVWAWMFLFGHLVWATGFMFLI). Chlorophyll a-binding residues include histidine 654, methionine 662, and tyrosine 670. Tryptophan 671 is a binding site for phylloquinone. Residues 707–727 (LVGLAHFSVGYIFTYAAFLIA) traverse the membrane as a helical segment.

This sequence belongs to the PsaA/PsaB family. The PsaA/B heterodimer binds the P700 chlorophyll special pair and subsequent electron acceptors. PSI consists of a core antenna complex that captures photons, and an electron transfer chain that converts photonic excitation into a charge separation. The eukaryotic PSI reaction center is composed of at least 11 subunits. The cofactor is P700 is a chlorophyll a/chlorophyll a' dimer, A0 is one or more chlorophyll a, A1 is one or both phylloquinones and FX is a shared 4Fe-4S iron-sulfur center..

The protein resides in the plastid. It localises to the chloroplast thylakoid membrane. The enzyme catalyses reduced [plastocyanin] + hnu + oxidized [2Fe-2S]-[ferredoxin] = oxidized [plastocyanin] + reduced [2Fe-2S]-[ferredoxin]. Functionally, psaA and PsaB bind P700, the primary electron donor of photosystem I (PSI), as well as the electron acceptors A0, A1 and FX. PSI is a plastocyanin-ferredoxin oxidoreductase, converting photonic excitation into a charge separation, which transfers an electron from the donor P700 chlorophyll pair to the spectroscopically characterized acceptors A0, A1, FX, FA and FB in turn. Oxidized P700 is reduced on the lumenal side of the thylakoid membrane by plastocyanin. The polypeptide is Photosystem I P700 chlorophyll a apoprotein A2 (Eucalyptus globulus subsp. globulus (Tasmanian blue gum)).